We begin with the raw amino-acid sequence, 367 residues long: Eukaryotic translation initiation factor 3 subunit H (367 aa).

The MPN domain maps to 14–166 (VQVEALVVMK…LRAFRLSPTF (153 aa)).

The protein belongs to the eIF-3 subunit H family. As to quaternary structure, component of the eukaryotic translation initiation factor 3 (eIF-3) complex.

The protein resides in the cytoplasm. In terms of biological role, component of the eukaryotic translation initiation factor 3 (eIF-3) complex, which is involved in protein synthesis of a specialized repertoire of mRNAs and, together with other initiation factors, stimulates binding of mRNA and methionyl-tRNAi to the 40S ribosome. The eIF-3 complex specifically targets and initiates translation of a subset of mRNAs involved in cell proliferation. This is Eukaryotic translation initiation factor 3 subunit H from Botryotinia fuckeliana (strain B05.10) (Noble rot fungus).